The sequence spans 208 residues: Guanylate kinase (208 aa).

Residues 5–184 (GLLIVFSGPS…AAERVKCVIE (180 aa)) form the Guanylate kinase-like domain. 12-19 (GPSGVGKG) contributes to the ATP binding site.

This sequence belongs to the guanylate kinase family.

It is found in the cytoplasm. It catalyses the reaction GMP + ATP = GDP + ADP. Its function is as follows. Essential for recycling GMP and indirectly, cGMP. This is Guanylate kinase from Streptococcus pneumoniae serotype 4 (strain ATCC BAA-334 / TIGR4).